The primary structure comprises 196 residues: Pyridoxal 5'-phosphate synthase subunit PdxT (196 aa).

47 to 49 (GES) is a binding site for L-glutamine. The Nucleophile role is filled by Cys79. Residues Arg106 and 134-135 (IR) each bind L-glutamine. Residues His170 and Glu172 each act as charge relay system in the active site.

It belongs to the glutaminase PdxT/SNO family. As to quaternary structure, in the presence of PdxS, forms a dodecamer of heterodimers. Only shows activity in the heterodimer.

The catalysed reaction is aldehydo-D-ribose 5-phosphate + D-glyceraldehyde 3-phosphate + L-glutamine = pyridoxal 5'-phosphate + L-glutamate + phosphate + 3 H2O + H(+). It catalyses the reaction L-glutamine + H2O = L-glutamate + NH4(+). The protein operates within cofactor biosynthesis; pyridoxal 5'-phosphate biosynthesis. Functionally, catalyzes the hydrolysis of glutamine to glutamate and ammonia as part of the biosynthesis of pyridoxal 5'-phosphate. The resulting ammonia molecule is channeled to the active site of PdxS. The sequence is that of Pyridoxal 5'-phosphate synthase subunit PdxT from Bacillus thuringiensis subsp. konkukian (strain 97-27).